The sequence spans 742 residues: Clamp-binding protein CrfC (742 aa).

Residues 41 to 45 (QLALP) are clamp-binding consensus. In terms of domain architecture, Dynamin-type G spans 66–402 (SRLEMVLAIV…LWEDSLFAQP (337 aa)). Positions 76-83 (GTMKAGKS) are G1 motif. Residues 102 to 104 (MTA) are G2 motif. The interval 236–239 (DTPG) is G3 motif. A G4 motif region spans residues 297–300 (NKFD). The segment at 331–334 (FPVS) is G5 motif. Residues 440 to 472 (RAHGLNVACEQLRQNIHQIEESLQLLQLNQAQV) are a coiled coil.

This sequence belongs to the TRAFAC class dynamin-like GTPase superfamily. Dynamin/Fzo/YdjA family. As to quaternary structure, forms homooligomers. Binds to the beta sliding clamp processivity factor (DnaN) in the presence and absence of DNA, may bind to the clamp itself as homodimers or trimers. Homooligomers may be able to bind more than 1 clamp complex.

The protein localises to the cytoplasm. In terms of biological role, important for the colocalization of sister nascent DNA strands after replication fork passage during DNA replication, and for positioning and subsequent partitioning of sister chromosomes. Does not have GTPase activity on its own. This chain is Clamp-binding protein CrfC (crfC), found in Escherichia coli (strain K12).